Consider the following 154-residue polypeptide: MQAVQVKVLNPKITEDKAFSLPTRATDGSAGIDLRACIDEPLTIKAGATHLIGTGLAVYIQDPNFAGMILPRSGLGHKHGIVLGNLVGLIDADYQGELMVSIWNRSQEDFVLTPAERMAQYVVVPVARPEFEVVTEFSDTSARGAGGFGHSGRQ.

Substrate-binding positions include 72 to 74 (RSG), Asn85, 89 to 91 (LID), and Met99.

The protein belongs to the dUTPase family. It depends on Mg(2+) as a cofactor.

It catalyses the reaction dUTP + H2O = dUMP + diphosphate + H(+). Its pathway is pyrimidine metabolism; dUMP biosynthesis; dUMP from dCTP (dUTP route): step 2/2. Its function is as follows. This enzyme is involved in nucleotide metabolism: it produces dUMP, the immediate precursor of thymidine nucleotides and it decreases the intracellular concentration of dUTP so that uracil cannot be incorporated into DNA. The chain is Deoxyuridine 5'-triphosphate nucleotidohydrolase from Psychrobacter cryohalolentis (strain ATCC BAA-1226 / DSM 17306 / VKM B-2378 / K5).